We begin with the raw amino-acid sequence, 28 residues long: Cyclotide ltri-A (28 aa).

The segment at residues 1–28 is a cross-link (cyclopeptide (Gly-Asn)); that stretch reads GVACGESCVYLPCFTVGCTCTSSQCFKN. 3 disulfides stabilise this stretch: C4/C18, C8/C20, and C13/C25.

The protein belongs to the cyclotide family. Bracelet subfamily. This is a cyclic peptide.

Its function is as follows. Probably participates in a plant defense mechanism. The polypeptide is Cyclotide ltri-A (Leonia triandra).